The following is a 916-amino-acid chain: Nonsense-mediated mRNA decay factor SMG8 (916 aa).

The segment at 566–626 (LENSNRTPDT…KNYASQGDAD (61 aa)) is disordered. The span at 589–604 (LSGSQKSQDSASNLTF) shows a compositional bias: polar residues.

Belongs to the SMG8 family.

Involved in nonsense-mediated decay (NMD) of mRNAs containing premature stop codons. Probable component of kinase complex containing SMG1 and recruited to stalled ribosomes. The chain is Nonsense-mediated mRNA decay factor SMG8 from Aedes aegypti (Yellowfever mosquito).